The sequence spans 559 residues: Glucosylglycerate phosphorylase (559 aa).

Asp-229 acts as the Nucleophile in catalysis.

The protein belongs to the glycosyl hydrolase 13 family. Glucosylglycerate phosphorylase subfamily.

It catalyses the reaction (2R)-2-O-(alpha-D-glucopyranosyl)-glycerate + phosphate = (R)-glycerate + alpha-D-glucose 1-phosphate. Its function is as follows. Catalyzes the reversible phosphorolysis of glucosylglycerate into alpha-D-glucose 1-phosphate (Glc1P) and D-glycerate (also called (R)-glycerate). May be a regulator of intracellular levels of glucosylglycerate, a compatible solute that primarily protects organisms facing salt stress and very specific nutritional constraints. Cannot catalyze the phosphorolysis of sucrose. Does not act on other sugars such as alpha-D-galactose 1-phosphate, alpha-D-mannose 1-phosphate or beta-D-glucose 1-phosphate; in vitro D-erythronate can substitute for D-glycerate with a much lower efficiency. The chain is Glucosylglycerate phosphorylase (ycjM) from Escherichia coli (strain K12).